A 323-amino-acid chain; its full sequence is Penicillopepsin-1 (323 aa).

An O-linked (Man...) serine glycan is attached at S3. O-linked (Man...) threonine glycosylation occurs at T7. The Peptidase A1 domain occupies 17-320 (YITPVTIGGT…DSDGPQLGFA (304 aa)). Residues D33 and D213 contribute to the active site. C249 and C283 are oxidised to a cystine.

Belongs to the peptidase A1 family. In terms of assembly, monomer.

Its subcellular location is the secreted. The catalysed reaction is Hydrolysis of proteins with broad specificity similar to that of pepsin A, preferring hydrophobic residues at P1 and P1', but also cleaving 20-Gly-|-Glu-21 in the B chain of insulin. Clots milk, and activates trypsinogen.. Functionally, secreted aspartic endopeptidase that allows assimilation of proteinaceous substrates. The scissile peptide bond is attacked by a nucleophilic water molecule activated by two aspartic residues in the active site. Shows a broad primary substrate specificity. Favors hydrophobic residues at the P1 and P1' positions, but can also activate trypsinogen and hydrolyze the B chain of insulin between positions 'Gly-20' and 'Glu-21'. The polypeptide is Penicillopepsin-1 (Penicillium janthinellum (Penicillium vitale)).